Consider the following 264-residue polypeptide: MALKFAANLNFLFTERATSIAERIRLAHQNGFRAVEIPYPEGETSDVVSAVKETGVVVSLVNLAFDKSDDQLRFGSTSVPGSEKLFRSQLDATIDFARQVNCGKIHLTAGLFKGGQESDYTKTYTANLKIAADSLRASKMIGVIEPINKYAVPGYYMNSYSKAAGILADVAADNIQLLADLYHLQHLHGNVSKTLEEYKALIGHFQIAQVPHRHEPDVSGELDYGFVFKALQEFGYDGWIGCEYKPKTTTVEGLGWVSKLGYTL.

Catalysis depends on proton donor/acceptor residues glutamate 145 and glutamate 243.

Belongs to the hyi family.

The enzyme catalyses 3-hydroxypyruvate = 2-hydroxy-3-oxopropanoate. Functionally, catalyzes the reversible isomerization between hydroxypyruvate and 2-hydroxy-3-oxopropanoate (also termed tartronate semialdehyde). The chain is Putative hydroxypyruvate isomerase (Gip) from Drosophila melanogaster (Fruit fly).